The chain runs to 205 residues: Small ribosomal subunit protein uS4 (205 aa).

A disordered region spans residues Asn-18–Gly-49. The region spanning Arg-94–Asn-157 is the S4 RNA-binding domain.

The protein belongs to the universal ribosomal protein uS4 family. In terms of assembly, part of the 30S ribosomal subunit. Contacts protein S5. The interaction surface between S4 and S5 is involved in control of translational fidelity.

In terms of biological role, one of the primary rRNA binding proteins, it binds directly to 16S rRNA where it nucleates assembly of the body of the 30S subunit. Its function is as follows. With S5 and S12 plays an important role in translational accuracy. In Nitrobacter winogradskyi (strain ATCC 25391 / DSM 10237 / CIP 104748 / NCIMB 11846 / Nb-255), this protein is Small ribosomal subunit protein uS4.